The following is a 29-amino-acid chain: Cyclotide mela-4 (29 aa).

The cyclopeptide (Gly-Asn) cross-link spans 1–29 (GKPICGETCFKGKCYTPGCTCSYPICKKN). 3 disulfide bridges follow: cysteine 5–cysteine 19, cysteine 9–cysteine 21, and cysteine 14–cysteine 26.

Post-translationally, this is a cyclic peptide. In terms of processing, contains 3 disulfide bonds.

Functionally, probably participates in a plant defense mechanism (Potential). Binds to and induces leakage in phospholipd membranes, particularly ones containing 1-palmitoyl-2-oleophosphatidylethanolamine (POPE). In vitro, displays cytotoxicity against cultured cells. Not active against Gram-negative bacterium E.coli ATCC 25922 or Gram-positive bacterium S.aureus ATCC 25923 up to a concentration of 64 uM. The sequence is that of Cyclotide mela-4 from Melicytus latifolius (Norfolk Island mahoe).